The following is a 593-amino-acid chain: Polyphenol oxidase, chloroplastic (593 aa).

The span at 1–13 (MTSLSPPVVTTPT) shows a compositional bias: low complexity. The segment at 1 to 34 (MTSLSPPVVTTPTVPNPATKPLSPFSQNNSQVSL) is disordered. Residues 1-89 (MTSLSPPVVT…GMGTDPFAFA (89 aa)) constitute a chloroplast transit peptide. Residues 24 to 34 (PFSQNNSQVSL) are compositionally biased toward polar residues. Disulfide bonds link C100–C115 and C114–C176. H175, H196, H205, H327, H331, and H361 together coordinate Cu cation. A cross-link (2'-(S-cysteinyl)-histidine (Cys-His)) is located at residues 179-196 (CDGAYDQVGFPELELQIH).

It belongs to the tyrosinase family. Requires Cu(2+) as cofactor.

The protein localises to the plastid. It localises to the chloroplast thylakoid lumen. The catalysed reaction is 2 catechol + O2 = 2 1,2-benzoquinone + 2 H2O. Catalyzes the oxidation of mono- and o-diphenols to o-diquinones. In Malus domestica (Apple), this protein is Polyphenol oxidase, chloroplastic.